A 423-amino-acid chain; its full sequence is Glycine amidinotransferase, mitochondrial (423 aa).

The transit peptide at 1–43 (MLRVRCLRGGSRGAEALHYIGSRLGRTVTGWVQRTFQSTQAAT) directs the protein to the mitochondrion. 2 positions are modified to phosphoserine: serine 46 and serine 49. Residue aspartate 170 coordinates arginine. Residues aspartate 254 and histidine 303 contribute to the active site. Arginine-binding residues include aspartate 305, arginine 322, serine 354, and serine 355. An N6-acetyllysine modification is found at lysine 385. The active-site Amidino-cysteine intermediate is cysteine 407.

It belongs to the amidinotransferase family. As to quaternary structure, homodimer. As to expression, kidney. Expressed biallelically in placenta.

It is found in the mitochondrion inner membrane. It carries out the reaction L-arginine + glycine = guanidinoacetate + L-ornithine. The catalysed reaction is 4-aminobutanoate + L-arginine = 4-guanidinobutanoate + L-ornithine. It catalyses the reaction beta-alanine + L-arginine = 3-guanidinopropanoate + L-ornithine. The enzyme catalyses taurine + L-arginine = taurocyamine + L-ornithine. It participates in amine and polyamine biosynthesis; creatine biosynthesis; creatine from L-arginine and glycine: step 1/2. Its function is as follows. Transamidinase that catalyzes the transfer of the amidino group of L-arginine onto the amino moiety of acceptor metabolites such as glycine, beta-alanine, gamma-aminobutyric acid (GABA) and taurine yielding the corresponding guanidine derivatives. Catalyzes the rate-limiting step of creatine biosynthesis, namely the transfer of the amidino group from L-arginine to glycine to generate guanidinoacetate, which is then methylated by GAMT to form creatine. Provides creatine as a source for ATP generation in tissues with high energy demands, in particular skeletal muscle, heart and brain. This Sus scrofa (Pig) protein is Glycine amidinotransferase, mitochondrial (GATM).